The primary structure comprises 460 residues: Cation efflux system protein CusC (460 aa).

An N-terminal signal peptide occupies residues 1–17; it reads MSPCKLLPFCVALALTG. Residue C18 is the site of N-palmitoyl cysteine attachment. Residue C18 is the site of S-diacylglycerol cysteine attachment.

The protein belongs to the outer membrane factor (OMF) (TC 1.B.17) family. Homotrimer. Component of the cus efflux system composed of CusA, CusB, CusC and CusF.

The protein localises to the cell outer membrane. Forms pores that allow passive diffusion of cations across the outer membrane. Part of a cation efflux system that mediates resistance to copper and silver. In Escherichia coli O157:H7, this protein is Cation efflux system protein CusC (cusC).